We begin with the raw amino-acid sequence, 416 residues long: Formyl-CoA:oxalate CoA-transferase (416 aa).

CoA contacts are provided by residues 17-18 (QS), arginine 38, 72-75 (LNTK), 96-98 (NFH), histidine 104, and 137-140 (KAYE). Residue aspartate 169 is the Nucleophile of the active site. 248–250 (GGQ) contributes to the substrate binding site. Residue 273-275 (QEQ) coordinates CoA.

The protein belongs to the CoA-transferase III family. Frc subfamily. In terms of assembly, homodimer.

The enzyme catalyses formyl-CoA + oxalate = oxalyl-CoA + formate. It participates in metabolic intermediate degradation; oxalate degradation; CO(2) and formate from oxalate: step 1/2. In terms of biological role, involved in the catabolism of oxalate and in the adapatation to low pH via the induction of the oxalate-dependent acid tolerance response (ATR). Catalyzes the transfer of the CoA moiety from formyl-CoA to oxalate. This chain is Formyl-CoA:oxalate CoA-transferase, found in Escherichia coli O17:K52:H18 (strain UMN026 / ExPEC).